The sequence spans 220 residues: Probable transaldolase (220 aa).

Catalysis depends on Lys87, which acts as the Schiff-base intermediate with substrate.

The protein belongs to the transaldolase family. Type 3B subfamily.

It localises to the cytoplasm. The enzyme catalyses D-sedoheptulose 7-phosphate + D-glyceraldehyde 3-phosphate = D-erythrose 4-phosphate + beta-D-fructose 6-phosphate. Its pathway is carbohydrate degradation; pentose phosphate pathway; D-glyceraldehyde 3-phosphate and beta-D-fructose 6-phosphate from D-ribose 5-phosphate and D-xylulose 5-phosphate (non-oxidative stage): step 2/3. Its function is as follows. Transaldolase is important for the balance of metabolites in the pentose-phosphate pathway. The polypeptide is Probable transaldolase (Porphyromonas gingivalis (strain ATCC 33277 / DSM 20709 / CIP 103683 / JCM 12257 / NCTC 11834 / 2561)).